We begin with the raw amino-acid sequence, 187 residues long: UPF0340 protein SP70585_0722 (187 aa).

The protein belongs to the UPF0340 family.

This chain is UPF0340 protein SP70585_0722, found in Streptococcus pneumoniae (strain 70585).